A 327-amino-acid chain; its full sequence is GTP 3',8-cyclase (327 aa).

In terms of domain architecture, Radical SAM core spans 4-226 (AFARDIHYLR…LRLGDHPGIR (223 aa)). Residue Arg-13 coordinates GTP. Positions 20 and 24 each coordinate [4Fe-4S] cluster. Tyr-26 contacts S-adenosyl-L-methionine. Cys-27 lines the [4Fe-4S] cluster pocket. GTP is bound at residue Arg-63. Gly-67 contributes to the S-adenosyl-L-methionine binding site. Residue Thr-94 participates in GTP binding. Position 118 (Ser-118) interacts with S-adenosyl-L-methionine. Lys-155 contacts GTP. Residue Met-189 coordinates S-adenosyl-L-methionine. Cys-254 and Cys-257 together coordinate [4Fe-4S] cluster. 259–261 (RLR) serves as a coordination point for GTP. Cys-271 lines the [4Fe-4S] cluster pocket.

Belongs to the radical SAM superfamily. MoaA family. In terms of assembly, monomer and homodimer. [4Fe-4S] cluster is required as a cofactor.

It carries out the reaction GTP + AH2 + S-adenosyl-L-methionine = (8S)-3',8-cyclo-7,8-dihydroguanosine 5'-triphosphate + 5'-deoxyadenosine + L-methionine + A + H(+). It functions in the pathway cofactor biosynthesis; molybdopterin biosynthesis. Catalyzes the cyclization of GTP to (8S)-3',8-cyclo-7,8-dihydroguanosine 5'-triphosphate. In Heliobacterium modesticaldum (strain ATCC 51547 / Ice1), this protein is GTP 3',8-cyclase.